The following is a 482-amino-acid chain: ATP synthase subunit beta (482 aa).

Residue Gly161–Thr168 participates in ATP binding.

This sequence belongs to the ATPase alpha/beta chains family. As to quaternary structure, F-type ATPases have 2 components, CF(1) - the catalytic core - and CF(0) - the membrane proton channel. CF(1) has five subunits: alpha(3), beta(3), gamma(1), delta(1), epsilon(1). CF(0) has four main subunits: a(1), b(1), b'(1) and c(9-12).

Its subcellular location is the cellular thylakoid membrane. The enzyme catalyses ATP + H2O + 4 H(+)(in) = ADP + phosphate + 5 H(+)(out). Functionally, produces ATP from ADP in the presence of a proton gradient across the membrane. The catalytic sites are hosted primarily by the beta subunits. In Microcystis aeruginosa (strain NIES-843 / IAM M-2473), this protein is ATP synthase subunit beta.